Here is a 4485-residue protein sequence, read N- to C-terminus: Dynein gamma chain, flagellar outer arm (4485 aa).

Residues methionine 1 to glutamate 1780 are stem. Coiled coils occupy residues isoleucine 449–lysine 469, valine 804–tyrosine 838, valine 1093–isoleucine 1114, aspartate 1275–leucine 1297, and lysine 1699–threonine 1727. AAA stretches follow at residues tyrosine 1781–threonine 2002, lysine 2061–lysine 2279, threonine 2384–glycine 2638, and lysine 2763–tyrosine 3013. Residues glycine 1819–threonine 1826, glycine 2099–serine 2106, glycine 2425–threonine 2432, and glycine 2802–glutamine 2809 each bind ATP. Coiled coils occupy residues alanine 3077 to glutamine 3099, glutamate 3196 to glutamate 3227, lysine 3265 to glutamate 3343, and glutamate 3569 to arginine 3663. The segment at alanine 3077–glutamate 3343 is stalk. AAA stretches follow at residues leucine 3412–glutamate 3643 and alanine 3857–asparagine 4071.

The protein belongs to the dynein heavy chain family. In terms of assembly, consists of at least 3 heavy chains (alpha, beta and gamma), 2 intermediate chains and 8 light chains.

The protein localises to the cell projection. Its subcellular location is the cilium. It is found in the flagellum. It localises to the cytoplasm. The protein resides in the cytoskeleton. The protein localises to the flagellum axoneme. Its function is as follows. Force generating protein of eukaryotic cilia and flagella. Produces force towards the minus ends of microtubules. Dynein has ATPase activity; the force-producing power stroke is thought to occur on release of ADP. In Chlamydomonas reinhardtii (Chlamydomonas smithii), this protein is Dynein gamma chain, flagellar outer arm (ODA2).